A 503-amino-acid polypeptide reads, in one-letter code: Probable DNA ligase (503 aa).

E210 is an ATP binding site. Residue K212 is the N6-AMP-lysine intermediate of the active site. ATP-binding residues include R217, R232, E261, F296, R367, and K373.

The protein belongs to the ATP-dependent DNA ligase family. Mg(2+) is required as a cofactor.

It catalyses the reaction ATP + (deoxyribonucleotide)n-3'-hydroxyl + 5'-phospho-(deoxyribonucleotide)m = (deoxyribonucleotide)n+m + AMP + diphosphate.. In terms of biological role, DNA ligase that seals nicks in double-stranded DNA during DNA replication, DNA recombination and DNA repair. This is Probable DNA ligase from Rhodococcus jostii (strain RHA1).